The chain runs to 209 residues: MAPAQRPLLPLLLLLLPLRARNEDPARANADRYAVYWNRSNPRFQVSAVGDGGGYTVEVSINDYLDIYCPHYGAPLPPAERMERYILYMVNGEGHASCDHRQRGFKRWECNRPAAPGGPLKFSEKFQLFTPFSLGFEFRPGHEYYYISATPPNLVDRPCLRLKVYVRPTNETLYEAPEPIFTSNSSCSGLGGCHLFLTTVPVLWSLLGS.

The first 20 residues, 1–20 (MAPAQRPLLPLLLLLLPLRA), serve as a signal peptide directing secretion. The Ephrin RBD domain maps to 30–170 (ADRYAVYWNR…RLKVYVRPTN (141 aa)). A glycan (N-linked (GlcNAc...) asparagine) is linked at Asn-38. 2 disulfides stabilise this stretch: Cys-69-Cys-110 and Cys-98-Cys-159. N-linked (GlcNAc...) asparagine glycosylation is found at Asn-170 and Asn-184. Asn-184 carries the GPI-anchor amidated asparagine lipid modification. Positions 185–209 (SSCSGLGGCHLFLTTVPVLWSLLGS) are cleaved as a propeptide — removed in mature form.

The protein belongs to the ephrin family. As to quaternary structure, binds to the receptor tyrosine kinases EPHA3, EPHA4 and EPHA5. Interacts with EPHA8; activates EPHA8. As to expression, expressed in myogenic progenitor cells.

It localises to the cell membrane. Cell surface GPI-bound ligand for Eph receptors, a family of receptor tyrosine kinases which are crucial for migration, repulsion and adhesion during neuronal, vascular and epithelial development. Binds promiscuously Eph receptors residing on adjacent cells, leading to contact-dependent bidirectional signaling into neighboring cells. The signaling pathway downstream of the receptor is referred to as forward signaling while the signaling pathway downstream of the ephrin ligand is referred to as reverse signaling. With the EPHA2 receptor may play a role in bone remodeling through regulation of osteoclastogenesis and osteoblastogenesis. The chain is Ephrin-A2 (Efna2) from Mus musculus (Mouse).